The primary structure comprises 264 residues: Small ribosomal subunit protein uS2 (264 aa).

The interval V228 to E264 is disordered. Residues V234–E264 are compositionally biased toward acidic residues.

Belongs to the universal ribosomal protein uS2 family.

In Symbiobacterium thermophilum (strain DSM 24528 / JCM 14929 / IAM 14863 / T), this protein is Small ribosomal subunit protein uS2.